The chain runs to 113 residues: Endoribonuclease SymE (113 aa).

The region spanning 29 to 74 (SRYPDYSRIPAITLKGQWLEAAGFATGTAVDVKVMEGCIVLTAQPP) is the SpoVT-AbrB domain.

Belongs to the SymE family.

Its subcellular location is the cytoplasm. In terms of biological role, involved in the degradation and recycling of damaged RNA. It is itself a target for degradation by the ATP-dependent protease Lon. This Escherichia coli (strain K12 / MC4100 / BW2952) protein is Endoribonuclease SymE.